We begin with the raw amino-acid sequence, 256 residues long: UPF0246 protein Bpet1601 (256 aa).

The protein belongs to the UPF0246 family.

The protein is UPF0246 protein Bpet1601 of Bordetella petrii (strain ATCC BAA-461 / DSM 12804 / CCUG 43448).